A 308-amino-acid chain; its full sequence is Putative S-adenosyl-L-methionine-dependent methyltransferase MAB_4585c (308 aa).

S-adenosyl-L-methionine contacts are provided by residues D131 and 160 to 161 (DL).

It belongs to the UPF0677 family.

Exhibits S-adenosyl-L-methionine-dependent methyltransferase activity. The polypeptide is Putative S-adenosyl-L-methionine-dependent methyltransferase MAB_4585c (Mycobacteroides abscessus (strain ATCC 19977 / DSM 44196 / CCUG 20993 / CIP 104536 / JCM 13569 / NCTC 13031 / TMC 1543 / L948) (Mycobacterium abscessus)).